The chain runs to 216 residues: MATRITNQKLSKSSRAWMREHLDDPFVKKAQKEGYRARAAYKLLEIQEKYKLIKPGMTVVDLGAAPGSWSQIAGKLVGSKGLVIASDILPMDALPDVTFLQGDFREEAVFEKLLNILNGRQVDIVISDMAPNTSGNRAVDQPRQIYLCELALDFAQKVLGPNGQFVVKVFQGAGFDEFRKQVVDSFDVLKTAKPAASRARSKEVFLVGQGRKKALQ.

S-adenosyl-L-methionine-binding residues include Gly-67, Trp-69, Asp-87, Asp-103, and Asp-128. Residue Lys-168 is the Proton acceptor of the active site.

This sequence belongs to the class I-like SAM-binding methyltransferase superfamily. RNA methyltransferase RlmE family.

The protein localises to the cytoplasm. The catalysed reaction is uridine(2552) in 23S rRNA + S-adenosyl-L-methionine = 2'-O-methyluridine(2552) in 23S rRNA + S-adenosyl-L-homocysteine + H(+). Functionally, specifically methylates the uridine in position 2552 of 23S rRNA at the 2'-O position of the ribose in the fully assembled 50S ribosomal subunit. This is Ribosomal RNA large subunit methyltransferase E from Acinetobacter baumannii (strain AB307-0294).